A 235-amino-acid chain; its full sequence is Thiamine import ATP-binding protein ThiQ (235 aa).

The ABC transporter domain maps to 2–230 (LKLIDITWLY…QASASALLGI (229 aa)). Residue 32–39 (GPSGAGKS) participates in ATP binding.

This sequence belongs to the ABC transporter superfamily. Thiamine importer (TC 3.A.1.19.1) family. As to quaternary structure, the complex is composed of two ATP-binding proteins (ThiQ), two transmembrane proteins (ThiP) and a solute-binding protein (ThiB).

The protein localises to the cell inner membrane. It carries out the reaction thiamine(out) + ATP + H2O = thiamine(in) + ADP + phosphate + H(+). In terms of biological role, part of the ABC transporter complex ThiBPQ involved in thiamine import. Responsible for energy coupling to the transport system. This Salmonella choleraesuis (strain SC-B67) protein is Thiamine import ATP-binding protein ThiQ.